Reading from the N-terminus, the 263-residue chain is Type III pantothenate kinase (263 aa).

An ATP-binding site is contributed by 6-13; the sequence is DVGNTNIK. Residue 108-111 coordinates substrate; it reads GSDR. The active-site Proton acceptor is the Asp-110. Asp-131 provides a ligand contact to K(+). Thr-134 is a binding site for ATP. Thr-187 serves as a coordination point for substrate.

Belongs to the type III pantothenate kinase family. In terms of assembly, homodimer. NH4(+) serves as cofactor. K(+) is required as a cofactor.

It is found in the cytoplasm. The enzyme catalyses (R)-pantothenate + ATP = (R)-4'-phosphopantothenate + ADP + H(+). Its pathway is cofactor biosynthesis; coenzyme A biosynthesis; CoA from (R)-pantothenate: step 1/5. In terms of biological role, catalyzes the phosphorylation of pantothenate (Pan), the first step in CoA biosynthesis. The chain is Type III pantothenate kinase from Anaplasma phagocytophilum (strain HZ).